Consider the following 400-residue polypeptide: Phosphoglycerate kinase (400 aa).

Residues 19–21 (DLN), R38, 61–64 (HLGR), R124, and R161 contribute to the substrate site. ATP contacts are provided by residues K211, G299, E330, and 356-359 (GGDS).

The protein belongs to the phosphoglycerate kinase family. As to quaternary structure, monomer.

It is found in the cytoplasm. It catalyses the reaction (2R)-3-phosphoglycerate + ATP = (2R)-3-phospho-glyceroyl phosphate + ADP. The protein operates within carbohydrate degradation; glycolysis; pyruvate from D-glyceraldehyde 3-phosphate: step 2/5. The chain is Phosphoglycerate kinase from Frankia casuarinae (strain DSM 45818 / CECT 9043 / HFP020203 / CcI3).